The chain runs to 132 residues: Ribosome-binding factor A (132 aa).

It belongs to the RbfA family. As to quaternary structure, monomer. Binds 30S ribosomal subunits, but not 50S ribosomal subunits or 70S ribosomes.

The protein resides in the cytoplasm. In terms of biological role, one of several proteins that assist in the late maturation steps of the functional core of the 30S ribosomal subunit. Associates with free 30S ribosomal subunits (but not with 30S subunits that are part of 70S ribosomes or polysomes). Required for efficient processing of 16S rRNA. May interact with the 5'-terminal helix region of 16S rRNA. The polypeptide is Ribosome-binding factor A (Xanthomonas campestris pv. campestris (strain 8004)).